Consider the following 196-residue polypeptide: Nodulation protein A (196 aa).

It belongs to the NodA family.

It localises to the cytoplasm. N-acyltransferase required for nodulation. Acts in the production of a small, heat-stable compound (Nod) that stimulates mitosis in various plant protoplasts. This is Nodulation protein A from Mesorhizobium plurifarium.